The primary structure comprises 312 residues: HTH-type transcriptional regulator PtxR (312 aa).

Positions 11–68 (LNLNHLYAFVAVAEHNSFTAAAEALGLSKSLLSEQLRRLEADLGIQLLTRTTRRMTLT) constitute an HTH lysR-type domain. Residues 28–47 (FTAAAEALGLSKSLLSEQLR) constitute a DNA-binding region (H-T-H motif).

The protein belongs to the LysR transcriptional regulatory family. Monomer in solution. May dimerize on binding to DNA. Interacts with PtxS in the absence of 2-ketogluconate. Binding of the 2-ketogluconate effector to PtxS causes PtxS/PtxR complex dissociation.

Negatively regulated by PtxS, which interacts with PtxR and prevents its activity. In terms of biological role, plays an important role in the regulation of the production of the virulence factor exotoxin A (toxA), via positive regulation of the transcription of the toxA gene. Acts by binding directly to the toxA promoter region. Besides toxA, PtxR modulates the expression of genes that code for the QS-controlled virulence factors. It negatively regulates the expression of the rhamnolipid and pyocyanine genes, through the autoinducer synthase RhlI, and the PQS synthesis operon pqsABCDE, while it positively regulates the expression of lasB through the autoinducer synthase LasI. Also positively regulates the expression of the exotoxin A regulatory protein (toxR or regA). Its function is as follows. In addition, is involved in the positive regulation of glucose metabolism via the regulation of the expression of the kgu and gad operons. Acts by binding directly to the promoter region of the kgu and gad operons. The protein is HTH-type transcriptional regulator PtxR of Pseudomonas aeruginosa (strain ATCC 15692 / DSM 22644 / CIP 104116 / JCM 14847 / LMG 12228 / 1C / PRS 101 / PAO1).